Reading from the N-terminus, the 611-residue chain is Elongation factor 4 (611 aa).

The region spanning 12–193 (AVIRNFCIIA…TIVAKVPAPE (182 aa)) is the tr-type G domain. Residues 24 to 29 (DHGKST) and 140 to 143 (NKID) each bind GTP.

The protein belongs to the TRAFAC class translation factor GTPase superfamily. Classic translation factor GTPase family. LepA subfamily.

The protein resides in the cell membrane. The enzyme catalyses GTP + H2O = GDP + phosphate + H(+). Functionally, required for accurate and efficient protein synthesis under certain stress conditions. May act as a fidelity factor of the translation reaction, by catalyzing a one-codon backward translocation of tRNAs on improperly translocated ribosomes. Back-translocation proceeds from a post-translocation (POST) complex to a pre-translocation (PRE) complex, thus giving elongation factor G a second chance to translocate the tRNAs correctly. Binds to ribosomes in a GTP-dependent manner. This is Elongation factor 4 from Cutibacterium acnes (strain DSM 16379 / KPA171202) (Propionibacterium acnes).